Here is a 210-residue protein sequence, read N- to C-terminus: Redox-sensing transcriptional repressor Rex (210 aa).

Residues 17-56 (KYHRYLYELLKNDVDRISSKELSEKIGFTASQIRQDLNCF) constitute a DNA-binding region (H-T-H motif). 91 to 96 (GAGNIG) contributes to the NAD(+) binding site.

It belongs to the transcriptional regulatory Rex family. Homodimer.

The protein resides in the cytoplasm. Its function is as follows. Modulates transcription in response to changes in cellular NADH/NAD(+) redox state. This is Redox-sensing transcriptional repressor Rex from Clostridium botulinum (strain ATCC 19397 / Type A).